The chain runs to 424 residues: Homoserine O-succinyltransferase (424 aa).

The AB hydrolase-1 domain occupies 67-381 (NAVLVCHALN…PHGHDAFLLD (315 aa)). The Nucleophile role is filled by serine 173. Arginine 243 lines the substrate pocket. Active-site residues include aspartate 342 and histidine 375. Aspartate 376 provides a ligand contact to substrate.

The protein belongs to the AB hydrolase superfamily. MetX family. Homodimer.

It is found in the cytoplasm. It catalyses the reaction L-homoserine + succinyl-CoA = O-succinyl-L-homoserine + CoA. Its pathway is amino-acid biosynthesis; L-methionine biosynthesis via de novo pathway; O-succinyl-L-homoserine from L-homoserine: step 1/1. Transfers a succinyl group from succinyl-CoA to L-homoserine, forming succinyl-L-homoserine. In vitro, also has serine succinyl transferase activity. The protein is Homoserine O-succinyltransferase of Bordetella petrii (strain ATCC BAA-461 / DSM 12804 / CCUG 43448).